Consider the following 114-residue polypeptide: uncharacterized protein (114 aa).

Over residues 1–20 (MGLSRWHDKNSRPAEEKSEE) the composition is skewed to basic and acidic residues. Positions 1–22 (MGLSRWHDKNSRPAEEKSEEMQ) are disordered.

May be involved in phosphatase regulation and/or generation of precursor metabolites and energy. This is an uncharacterized protein from Saccharomyces cerevisiae (strain ATCC 204508 / S288c) (Baker's yeast).